The following is a 549-amino-acid chain: Rhodopsin kinase grk7a (549 aa).

Ser-33 bears the Phosphoserine mark. An RGS domain is found at 53–171 (FESLCEKQPI…QASPFFDKFL (119 aa)). The Protein kinase domain maps to 186 to 449 (FYEFRTLGKG…NDDPRKHEWF (264 aa)). Residues 192-200 (LGKGGFGEV) and Lys-215 each bind ATP. Asp-311 (proton acceptor) is an active-site residue. Residues 450 to 515 (KSINFARLEA…GAVSIAWQQE (66 aa)) enclose the AGC-kinase C-terminal domain. The disordered stretch occupies residues 522–549 (FDELSDPNRKESSGGSDDDKKSGTCTLL). Residues 527 to 543 (DPNRKESSGGSDDDKKS) show a composition bias toward basic and acidic residues. Position 546 is a cysteine methyl ester (Cys-546). Cys-546 is lipidated: S-geranylgeranyl cysteine. A propeptide spans 547 to 549 (TLL) (removed in mature form).

Belongs to the protein kinase superfamily. AGC Ser/Thr protein kinase family. GPRK subfamily. Post-translationally, phosphorylation at Ser-33 is regulated by light and activated by cAMP.

It localises to the membrane. The catalysed reaction is L-threonyl-[rhodopsin] + ATP = O-phospho-L-threonyl-[rhodopsin] + ADP + H(+). It catalyses the reaction L-seryl-[rhodopsin] + ATP = O-phospho-L-seryl-[rhodopsin] + ADP + H(+). Retina-specific kinase involved in the shutoff of the photoresponse and adaptation to changing light conditions via cone opsin phosphorylation, including rhodopsin (RHO). The chain is Rhodopsin kinase grk7a (grk7a) from Danio rerio (Zebrafish).